We begin with the raw amino-acid sequence, 463 residues long: Adenosylhomocysteinase (463 aa).

The substrate site is built by threonine 54, aspartate 129, and glutamate 189. 190–192 (TTT) lines the NAD(+) pocket. Residues lysine 219 and aspartate 223 each coordinate substrate. NAD(+)-binding positions include asparagine 224, 253-258 (GYGDVG), glutamate 276, asparagine 311, 332-334 (IGH), and asparagine 377.

The protein belongs to the adenosylhomocysteinase family. NAD(+) is required as a cofactor.

The protein resides in the cytoplasm. The enzyme catalyses S-adenosyl-L-homocysteine + H2O = L-homocysteine + adenosine. It participates in amino-acid biosynthesis; L-homocysteine biosynthesis; L-homocysteine from S-adenosyl-L-homocysteine: step 1/1. May play a key role in the regulation of the intracellular concentration of adenosylhomocysteine. The chain is Adenosylhomocysteinase from Caulobacter vibrioides (strain ATCC 19089 / CIP 103742 / CB 15) (Caulobacter crescentus).